The primary structure comprises 133 residues: MSFIGEFKEFAMKGNVLDMAVGVVIGTAFGKIVSSLVGDIIMPIVGVITGGVNFTDLKITLKDAAQGVPAVTINYGNFIQTAVDFLIIAFCIFCVIKAINSLKRKPAEPEVAQPAAPAEDIVLLTQIRDLLKK.

The next 2 helical transmembrane spans lie at 10 to 30 (FAMKGNVLDMAVGVVIGTAFG) and 76 to 96 (GNFIQTAVDFLIIAFCIFCVI).

It belongs to the MscL family. In terms of assembly, homopentamer.

Its subcellular location is the cell inner membrane. Channel that opens in response to stretch forces in the membrane lipid bilayer. May participate in the regulation of osmotic pressure changes within the cell. The polypeptide is Large-conductance mechanosensitive channel (Campylobacter curvus (strain 525.92)).